The primary structure comprises 213 residues: ATP phosphoribosyltransferase (213 aa).

Belongs to the ATP phosphoribosyltransferase family. Short subfamily. Heteromultimer composed of HisG and HisZ subunits.

Its subcellular location is the cytoplasm. It catalyses the reaction 1-(5-phospho-beta-D-ribosyl)-ATP + diphosphate = 5-phospho-alpha-D-ribose 1-diphosphate + ATP. The protein operates within amino-acid biosynthesis; L-histidine biosynthesis; L-histidine from 5-phospho-alpha-D-ribose 1-diphosphate: step 1/9. Catalyzes the condensation of ATP and 5-phosphoribose 1-diphosphate to form N'-(5'-phosphoribosyl)-ATP (PR-ATP). Has a crucial role in the pathway because the rate of histidine biosynthesis seems to be controlled primarily by regulation of HisG enzymatic activity. This chain is ATP phosphoribosyltransferase, found in Synechococcus sp. (strain RCC307).